The following is a 1556-amino-acid chain: MADRSLEGMALPLEVRARLAELELELSEGDITQKGYEKKRSKLIGAYLPQPPRVDQALPQERRAPVTPSSASRYHRRRSSGSRDERYRSDVHTEAVQAALAKHKERKMAVPMPSKRRSLVVQTSMDAYTPPDTSSGSEDEGSVQGDSQGTPTSSQGSINMEHWISQAIHGSTTSTTSSSSTQSGGSGAAHRLADVMAQTHIENHSAPPDVTTYTSEHSIQVERPQGSTGSRTAPKYGNAELMETGDGVPVSSRVSAKIQQLVNTLKRPKRPPLREFFVDDFEELLEVQQPDPNQPKPEGAQMLAMRGEQLGVVTNWPPSLEAALQRWGTISPKAPCLTTMDTNGKPLYILTYGKLWTRSMKVAYSILHKLGTKQEPMVRPGDRVALVFPNNDPAAFMAAFYGCLLAEVVPVPIEVPLTRKDAGSQQIGFLLGSCGVTVALTSDACHKGLPKSPTGEIPQFKGWPKLLWFVTESKHLSKPPRDWFPHIKDANNDTAYIEYKTCKDGSVLGVTVTRTALLTHCQALTQACGYTEAETIVNVLDFKKDVGLWHGILTSVMNMMHVISIPYSLMKVNPLSWIQKVCQYKAKVACVKSRDMHWALVAHRDQRDINLSSLRMLIVADGANPWSISSCDAFLNVFQSKGLRQEVICPCASSPEALTVAIRRPTDDSNQPPGRGVLSMHGLTYGVIRVDSEEKLSVLTVQDVGLVMPGAIMCSVKPDGVPQLCRTDEIGELCVCAVATGTSYYGLSGMTKNTFEVFPMTSSGAPISEYPFIRTGLLGFVGPGGLVFVVGKMDGLMVVSGRRHNADDIVATALAVEPMKFVYRGRIAVFSVTVLHDERIVIVAEQRPDSTEEDSFQWMSRVLQAIDSIHQVGVYCLALVPANTLPKTPLGGIHLSETKQLFLEGSLHPCNVLMCPHTCVTNLPKPRQKQPEIGPASVMVGNLVSGKRIAQASGRDLGQIEDNDQARKFLFLSEVLQWRAQTTPDHILYTLLNCRGAIANSLTCVQLHKRAEKIAVMLMERGHLQDGDHVALVYPPGIDLIAAFYGCLYAGCVPITVRPPHPQNIATTLPTVKMIVEVSRSACLMTTQLICKLLRSREAAAAVDVRTWPLILDTDDLPKKRPAQICKPCNPDTLAYLDFSVSTTGMLAGVKMSHAATSAFCRSIKLQCELYPSREVAICLDPYCGLGFVLWCLCSVYSGHQSILIPPSELETNPALWLLAVSQYKVRDTFCSYSVMELCTKGLGSQTESLKARGLDLSRVRTCVVVAEERPRIALTQSFSKLFKDLGLHPRAVSTSFGCRVNLAICLQGTSGPDPTTVYVDMRALRHDRVRLVERGSPHSLPLMESGKILPGVRIIIANPETKGPLGDSHLGEIWVHSAHNASGYFTIYGDESLQSDHFNSRLSFGDTQTIWARTGYLGFLRRTELTDANGERHDALYVVGALDEAMELRGMRYHPIDIETSVIRAHKSVTECAVFTWTNLLVVVVELDGSEQEALDLVPLVTNVVLEEHYLIVGVVVVVDIGVIPINSRGEKQRMHLRDGFLADQLDPIYVAYNM.

Positions 7-120 (EGMALPLEVR…PMPSKRRSLV (114 aa)) constitute a DMAP1-binding domain. Disordered stretches follow at residues 47 to 157 (YLPQ…SQGS) and 170 to 189 (GSTT…SGAA). Over residues 81 to 93 (GSRDERYRSDVHT) the composition is skewed to basic and acidic residues. 2 stretches are compositionally biased toward polar residues: residues 120 to 136 (VVQT…TSSG) and 144 to 157 (QGDS…SQGS). Positions 170-183 (GSTTSTTSSSSTQS) are enriched in low complexity. Phosphothreonine is present on Thr264.

It belongs to the DIP2 family.

This chain is Disco-interacting protein 2 homolog C (DIP2C), found in Homo sapiens (Human).